Here is a 326-residue protein sequence, read N- to C-terminus: Transformer-2 protein homolog (326 aa).

2 disordered regions span residues 1–114 and 179–326; these read MEVA…PSNV and LHGK…SYRR. Residues 38 to 55 are compositionally biased toward basic and acidic residues; that stretch reads RDSRERSPPRGNSRERSP. Residues 56–85 show a composition bias toward low complexity; that stretch reads PRGGSPNRGGSPNRGGSPNRGGSPNRGGSP. The span at 104–113 shows a compositional bias: polar residues; that stretch reads RLANTASPSN. One can recognise an RRM domain in the interval 113-191; that stretch reads NVLGVFGLAP…KSIRTDFSAT (79 aa). The span at 220 to 239 shows a compositional bias: gly residues; the sequence is YGGGDRYGRGDYGGRGGGGD. Residues 240-326 show a composition bias toward basic and acidic residues; it reads RYGRDDRGGD…DERPRDSYRR (87 aa).

The protein belongs to the splicing factor SR family.

The protein localises to the nucleus. In terms of biological role, sequence-specific RNA-binding protein which participates in the control of pre-mRNA splicing. The polypeptide is Transformer-2 protein homolog (tra2) (Dictyostelium discoideum (Social amoeba)).